The following is an 804-amino-acid chain: Leucine--tRNA ligase (804 aa).

The 'HIGH' region signature appears at 40 to 51; that stretch reads PYPSGAGLHVGH. Positions 576–580 match the 'KMSKS' region motif; it reads KMSKS. An ATP-binding site is contributed by Lys579.

The protein belongs to the class-I aminoacyl-tRNA synthetase family.

It localises to the cytoplasm. It catalyses the reaction tRNA(Leu) + L-leucine + ATP = L-leucyl-tRNA(Leu) + AMP + diphosphate. This chain is Leucine--tRNA ligase, found in Staphylococcus aureus (strain bovine RF122 / ET3-1).